A 393-amino-acid polypeptide reads, in one-letter code: MQNNPYSWIESSLSTIHKANWYRSVKTIESIPGAIIKLEGKKLINFASNDYLGLAGDERLIAAAIQATKEFGSGSTGSRLLTGHREIHQELEREIAKLKQTESALVFSSGYLANIGVISSVVSQRDLILSDEYNHSSLKNGAILSGAKIIEYSHNNIEYLKNKLEQKRENYRRSLIITDSVFSMDGDLCKLPLLLDLAEKYNSMLLVDEAHATGVFGINGGGCVEHFNCTGKQLIQIGTLSKALGSLGGYVAGSKNLIEFLRNRTPTWIYTTGLTPADTAAALTAIKIIKKEPERRMKLWQNLEIFINLLETESQLLHKGKKTSNYESPIICFPLKNAVEALKVGEKLKQEGIFAPAIRPPTVNTSRIRISLMSTHETSHLQQLIAALINLSQ.

Arg23 contributes to the substrate binding site. 110–111 (GY) contacts pyridoxal 5'-phosphate. Residue His135 coordinates substrate. Residues Ser183, 208–211 (DEAH), and 239–242 (TLSK) each bind pyridoxal 5'-phosphate. Lys242 carries the post-translational modification N6-(pyridoxal phosphate)lysine. Thr362 contacts substrate.

Belongs to the class-II pyridoxal-phosphate-dependent aminotransferase family. BioF subfamily. In terms of assembly, homodimer. It depends on pyridoxal 5'-phosphate as a cofactor.

The enzyme catalyses 6-carboxyhexanoyl-[ACP] + L-alanine + H(+) = (8S)-8-amino-7-oxononanoate + holo-[ACP] + CO2. It functions in the pathway cofactor biosynthesis; biotin biosynthesis. In terms of biological role, catalyzes the decarboxylative condensation of pimeloyl-[acyl-carrier protein] and L-alanine to produce 8-amino-7-oxononanoate (AON), [acyl-carrier protein], and carbon dioxide. This Trichodesmium erythraeum (strain IMS101) protein is Putative 8-amino-7-oxononanoate synthase (bioF).